Consider the following 212-residue polypeptide: Protein-L-isoaspartate O-methyltransferase (212 aa).

Serine 60 is an active-site residue.

The protein belongs to the methyltransferase superfamily. L-isoaspartyl/D-aspartyl protein methyltransferase family.

Its subcellular location is the cytoplasm. It catalyses the reaction [protein]-L-isoaspartate + S-adenosyl-L-methionine = [protein]-L-isoaspartate alpha-methyl ester + S-adenosyl-L-homocysteine. Its function is as follows. Catalyzes the methyl esterification of L-isoaspartyl residues in peptides and proteins that result from spontaneous decomposition of normal L-aspartyl and L-asparaginyl residues. It plays a role in the repair and/or degradation of damaged proteins. The sequence is that of Protein-L-isoaspartate O-methyltransferase from Methylorubrum populi (strain ATCC BAA-705 / NCIMB 13946 / BJ001) (Methylobacterium populi).